We begin with the raw amino-acid sequence, 272 residues long: uncharacterized protein (272 aa).

The signal sequence occupies residues 1–20; the sequence is MKLRKIFLLPLISLSTLSVA. Cysteine 21 is lipidated: N-palmitoyl cysteine. The S-diacylglycerol cysteine moiety is linked to residue cysteine 21.

This sequence belongs to the MG439/MG440 family.

The protein localises to the cell membrane. This is an uncharacterized protein from Mycoplasma genitalium (strain ATCC 33530 / DSM 19775 / NCTC 10195 / G37) (Mycoplasmoides genitalium).